Here is a 323-residue protein sequence, read N- to C-terminus: Beta-ketoacyl-[acyl-carrier-protein] synthase III (323 aa).

Residues Cys-113 and His-250 contribute to the active site. The tract at residues 251–255 (QANKR) is ACP-binding. Residue Asn-280 is part of the active site.

Belongs to the thiolase-like superfamily. FabH family. As to quaternary structure, homodimer.

The protein localises to the cytoplasm. It catalyses the reaction malonyl-[ACP] + acetyl-CoA + H(+) = 3-oxobutanoyl-[ACP] + CO2 + CoA. The protein operates within lipid metabolism; fatty acid biosynthesis. Catalyzes the condensation reaction of fatty acid synthesis by the addition to an acyl acceptor of two carbons from malonyl-ACP. Catalyzes the first condensation reaction which initiates fatty acid synthesis and may therefore play a role in governing the total rate of fatty acid production. Possesses both acetoacetyl-ACP synthase and acetyl transacylase activities. Its substrate specificity determines the biosynthesis of branched-chain and/or straight-chain of fatty acids. The sequence is that of Beta-ketoacyl-[acyl-carrier-protein] synthase III from Brucella abortus biovar 1 (strain 9-941).